The following is a 129-amino-acid chain: Lysozyme C-2 (129 aa).

The C-type lysozyme domain maps to 1-129 (KVFERCELAR…VSSYVEGCTL (129 aa)). 4 disulfides stabilise this stretch: C6-C127, C30-C115, C65-C81, and C77-C95. Catalysis depends on residues E35 and D53.

Belongs to the glycosyl hydrolase 22 family. Monomer.

It carries out the reaction Hydrolysis of (1-&gt;4)-beta-linkages between N-acetylmuramic acid and N-acetyl-D-glucosamine residues in a peptidoglycan and between N-acetyl-D-glucosamine residues in chitodextrins.. Functionally, lysozymes have primarily a bacteriolytic function; those in tissues and body fluids are associated with the monocyte-macrophage system and enhance the activity of immunoagents. The polypeptide is Lysozyme C-2 (Capra hircus (Goat)).